Here is a 163-residue protein sequence, read N- to C-terminus: C-type lectin lectoxin-Lio1 (163 aa).

The N-terminal stretch at 1–21 (MERFIFAALLVVALSLSGTGA) is a signal peptide. 3 disulfide bridges follow: Cys-25/Cys-36, Cys-53/Cys-152, and Cys-127/Cys-144. Residues 32 to 153 (SDGYCYKVFK…CRSKRYFICK (122 aa)) enclose the C-type lectin domain. Positions 117-119 (EPN) match the Mannose-binding motif. The Ca(2+) site is built by Glu-125 and Asp-141.

It belongs to the true venom lectin family. As to expression, expressed by the venom gland.

The protein resides in the secreted. In terms of biological role, mannose-binding lectin which recognizes specific carbohydrate structures and agglutinates a variety of animal cells by binding to cell-surface glycoproteins and glycolipids. May be a calcium-dependent lectin. The polypeptide is C-type lectin lectoxin-Lio1 (Erythrolamprus poecilogyrus (Water snake)).